We begin with the raw amino-acid sequence, 291 residues long: Tetrahydromethanopterin:alpha-L-glutamate ligase (291 aa).

Residues 101–286 (SVFLELNNLP…IADKLLEKII (186 aa)) enclose the ATP-grasp domain. ATP is bound by residues lysine 136, 175-187 (QEFI…EHRD), and arginine 203. Mg(2+) contacts are provided by aspartate 247, glutamate 259, and asparagine 261. Mn(2+) contacts are provided by aspartate 247, glutamate 259, and asparagine 261.

Belongs to the RimK family. MptN subfamily. As to quaternary structure, homodimer. Mg(2+) is required as a cofactor. Mn(2+) serves as cofactor.

The enzyme catalyses 5,6,7,8-tetrahydromethanopterin + L-glutamate + ATP = 5,6,7,8-tetrahydrosarcinapterin + ADP + phosphate + H(+). Its pathway is cofactor biosynthesis; 5,6,7,8-tetrahydrosarcinapterin biosynthesis. Functionally, catalyzes the ATP or GTP-dependent addition of one L-glutamate molecule to tetrahydromethanopterin, producing tetrahydrosarcinapterin. The polypeptide is Tetrahydromethanopterin:alpha-L-glutamate ligase (mptN) (Methanocaldococcus jannaschii (strain ATCC 43067 / DSM 2661 / JAL-1 / JCM 10045 / NBRC 100440) (Methanococcus jannaschii)).